Consider the following 504-residue polypeptide: TGF-beta-activated kinase 1 and MAP3K7-binding protein 1 (504 aa).

A disordered region spans residues 1–22 (MAAQRRSLLQSEQQPSWTDDLP). Position 7 is a phosphoserine (Ser-7). The segment covering 7–17 (SLLQSEQQPSW) has biased composition (polar residues). A PPM-type phosphatase domain is found at 28–365 (GVGSASNRSY…EDMTLLVRNF (338 aa)). Residue Ser-378 is modified to Phosphoserine. O-linked (GlcNAc) serine glycosylation is present at Ser-395. Position 423 is a phosphoserine; by MAPK14 (Ser-423). Residues 430-439 (ATPTLTNQSP) show a composition bias toward polar residues. The segment at 430–478 (ATPTLTNQSPTLTLQSTNTHTQSSSSSSDGGLFRSRPAHSLPPGEDGRV) is disordered. Thr-431 is subject to Phosphothreonine; by MAPK14. Phosphoserine; by MAPK14 is present on Ser-438. Positions 440 to 457 (TLTLQSTNTHTQSSSSSS) are enriched in low complexity. At Thr-442 the chain carries Phosphothreonine.

Interacts with XIAP and BIRC7. Interacts with TRAF6 and MAP3K7; during IL-1 signaling. Identified in the TRIKA2 complex composed of MAP3K7, TAB1 and TAB2. Interacts with TRAF6 and MAPK14; these interactions allow MAPK14 autophosphorylation. Interacts with STING1; interaction takes place following cGAMP activation and promotes TAB1 recruitment to the endoplasmic reticulum, triggering MAP3K7/TAK1 activation and STING1 phosphorylation. In terms of processing, phosphorylated at all three sites Ser-423, Thr-431 and Ser-438 by MAPK14 when cells were exposed to cellular stresses, or stimulated with TNF-alpha, IL1 or LPS. These phosphorylations inhibit TAK1 activation by a feedback control mechanism. Dephosphorylated by DUSP14 at Ser-438, leading to TAB1-MAP3K7/TAK1 complex inactivation in T-cells. Post-translationally, ubiquitinated by MAP3K1 with 'Lys-63'-linked polyubiquitin; leading to activation of TAK1 and of JNK and p38 MAP kinases following EGF and TGF-beta stimulation. Ubiquitinated by ITCH with 'Lys-48'-linked polyubiquitin; leading to proteasomal degradation. Ubiquitinated by RNF114 during maternal-to-zygotic transition; leading to degradation. (Microbial infection) Deubiquitinated by Y.enterocolitica YopP. In terms of processing, O-GlcNAcylated at Ser-395 by OGT is required for full MAP3K7/TAK1 activation upon stimulation with IL-1 or osmotic stress. Deglycosylated at Ser-395 by OGA. Ubiquitous.

Its subcellular location is the cytoplasm. It localises to the cytosol. The protein resides in the endoplasmic reticulum membrane. Its function is as follows. Key adapter protein that plays an essential role in JNK and NF-kappa-B activation and proinflammatory cytokines production in response to stimulation with TLRs and cytokines. Mechanistically, associates with the catalytic domain of MAP3K7/TAK1 to trigger MAP3K7/TAK1 autophosphorylation leading to its full activation. Similarly, associates with MAPK14 and triggers its autophosphorylation and subsequent activation. In turn, MAPK14 phosphorylates TAB1 and inhibits MAP3K7/TAK1 activation in a feedback control mechanism. Also plays a role in recruiting MAPK14 to the TAK1 complex for the phosphorylation of the TAB2 and TAB3 regulatory subunits. In Homo sapiens (Human), this protein is TGF-beta-activated kinase 1 and MAP3K7-binding protein 1 (TAB1).